Consider the following 601-residue polypeptide: Aspartate--tRNA(Asp/Asn) ligase (601 aa).

Glu-177 contacts L-aspartate. Positions 201 to 204 (QLFK) are aspartate. An L-aspartate-binding site is contributed by Arg-223. ATP is bound by residues 223 to 225 (RDE) and Gln-232. His-455 provides a ligand contact to L-aspartate. Glu-489 contributes to the ATP binding site. Arg-496 is a binding site for L-aspartate. 541–544 (GWDR) contributes to the ATP binding site. Positions 568–601 (VDPLTDAPAPIPLEQRRETGVDFKPKKKTDESAV) are disordered. The segment covering 581–601 (EQRRETGVDFKPKKKTDESAV) has biased composition (basic and acidic residues).

This sequence belongs to the class-II aminoacyl-tRNA synthetase family. Type 1 subfamily. In terms of assembly, homodimer.

It is found in the cytoplasm. It catalyses the reaction tRNA(Asx) + L-aspartate + ATP = L-aspartyl-tRNA(Asx) + AMP + diphosphate. In terms of biological role, aspartyl-tRNA synthetase with relaxed tRNA specificity since it is able to aspartylate not only its cognate tRNA(Asp) but also tRNA(Asn). Reaction proceeds in two steps: L-aspartate is first activated by ATP to form Asp-AMP and then transferred to the acceptor end of tRNA(Asp/Asn). The polypeptide is Aspartate--tRNA(Asp/Asn) ligase (Corynebacterium diphtheriae (strain ATCC 700971 / NCTC 13129 / Biotype gravis)).